Consider the following 429-residue polypeptide: Serine hydroxymethyltransferase (429 aa).

(6S)-5,6,7,8-tetrahydrofolate is bound by residues L126 and 130–132; that span reads GHL. An N6-(pyridoxal phosphate)lysine modification is found at K235.

Belongs to the SHMT family. Homodimer. Requires pyridoxal 5'-phosphate as cofactor.

The protein resides in the cytoplasm. It catalyses the reaction (6R)-5,10-methylene-5,6,7,8-tetrahydrofolate + glycine + H2O = (6S)-5,6,7,8-tetrahydrofolate + L-serine. It functions in the pathway one-carbon metabolism; tetrahydrofolate interconversion. Its pathway is amino-acid biosynthesis; glycine biosynthesis; glycine from L-serine: step 1/1. In terms of biological role, catalyzes the reversible interconversion of serine and glycine with tetrahydrofolate (THF) serving as the one-carbon carrier. This reaction serves as the major source of one-carbon groups required for the biosynthesis of purines, thymidylate, methionine, and other important biomolecules. Also exhibits THF-independent aldolase activity toward beta-hydroxyamino acids, producing glycine and aldehydes, via a retro-aldol mechanism. The polypeptide is Serine hydroxymethyltransferase (Zymomonas mobilis subsp. mobilis (strain ATCC 31821 / ZM4 / CP4)).